Reading from the N-terminus, the 294-residue chain is Cytidine deaminase (294 aa).

CMP/dCMP-type deaminase domains follow at residues 48–168 (DEDA…FGPK) and 186–294 (LTGD…VLLG). 89–91 (NME) serves as a coordination point for substrate. His-102 is a Zn(2+) binding site. Glu-104 functions as the Proton donor in the catalytic mechanism. Zn(2+) is bound by residues Cys-129 and Cys-132.

The protein belongs to the cytidine and deoxycytidylate deaminase family. Homodimer. Zn(2+) is required as a cofactor.

The enzyme catalyses cytidine + H2O + H(+) = uridine + NH4(+). It carries out the reaction 2'-deoxycytidine + H2O + H(+) = 2'-deoxyuridine + NH4(+). Its function is as follows. This enzyme scavenges exogenous and endogenous cytidine and 2'-deoxycytidine for UMP synthesis. This chain is Cytidine deaminase, found in Salmonella dublin (strain CT_02021853).